We begin with the raw amino-acid sequence, 487 residues long: Glutamyl-tRNA(Gln) amidotransferase subunit A (487 aa).

Active-site charge relay system residues include K80 and S155. The active-site Acyl-ester intermediate is S179.

Belongs to the amidase family. GatA subfamily. Heterotrimer of A, B and C subunits.

It carries out the reaction L-glutamyl-tRNA(Gln) + L-glutamine + ATP + H2O = L-glutaminyl-tRNA(Gln) + L-glutamate + ADP + phosphate + H(+). Allows the formation of correctly charged Gln-tRNA(Gln) through the transamidation of misacylated Glu-tRNA(Gln) in organisms which lack glutaminyl-tRNA synthetase. The reaction takes place in the presence of glutamine and ATP through an activated gamma-phospho-Glu-tRNA(Gln). The chain is Glutamyl-tRNA(Gln) amidotransferase subunit A from Leptospira interrogans serogroup Icterohaemorrhagiae serovar Lai (strain 56601).